A 206-amino-acid chain; its full sequence is N-(5'-phosphoribosyl)anthranilate isomerase (206 aa).

The protein belongs to the TrpF family.

The enzyme catalyses N-(5-phospho-beta-D-ribosyl)anthranilate = 1-(2-carboxyphenylamino)-1-deoxy-D-ribulose 5-phosphate. The protein operates within amino-acid biosynthesis; L-tryptophan biosynthesis; L-tryptophan from chorismate: step 3/5. This Pseudomonas putida (strain ATCC 47054 / DSM 6125 / CFBP 8728 / NCIMB 11950 / KT2440) protein is N-(5'-phosphoribosyl)anthranilate isomerase.